The primary structure comprises 226 residues: Protein-L-isoaspartate(D-aspartate) O-methyltransferase (226 aa).

Residues 57-60, histidine 65, serine 89, 115-116, 147-148, and threonine 222 contribute to the S-adenosyl-L-homocysteine site; these read VTIS, EH, and DG. Serine 60 is an active-site residue.

The protein belongs to the methyltransferase superfamily. L-isoaspartyl/D-aspartyl protein methyltransferase family. As to quaternary structure, monomer.

The protein localises to the cytoplasm. The protein resides in the cytosol. It carries out the reaction [protein]-L-isoaspartate + S-adenosyl-L-methionine = [protein]-L-isoaspartate alpha-methyl ester + S-adenosyl-L-homocysteine. Initiates the repair of damaged proteins by catalyzing methyl esterification of L-isoaspartyl and D-aspartyl residues produced by spontaneous isomerization and racemization of L-aspartyl and L-asparaginyl residues in aging peptides and proteins. The protein is Protein-L-isoaspartate(D-aspartate) O-methyltransferase (Pcmt) of Drosophila melanogaster (Fruit fly).